The following is an 87-amino-acid chain: Cell division topological specificity factor (87 aa).

Belongs to the MinE family.

Prevents the cell division inhibition by proteins MinC and MinD at internal division sites while permitting inhibition at polar sites. This ensures cell division at the proper site by restricting the formation of a division septum at the midpoint of the long axis of the cell. This Vibrio parahaemolyticus serotype O3:K6 (strain RIMD 2210633) protein is Cell division topological specificity factor.